A 601-amino-acid polypeptide reads, in one-letter code: MAACGAEERQRTGRLSALSVYRRAAGPGRLERRRRGTPLPAGGKRTKARLRRGAAGGGGPERAAPPQGAAVSDRVERAGSSEAKQGDLKTNPSGPPAKAPAGNLETKSPGGPLTTSVGPRAKAPAGSPEAKPPGDPATSPGGGGVPGLLRRLGRLEDSRRRAAELFRWLVAPAAPEEFARQHWERAPLLVQRGDPGYYAGLFSTADFDAILRSGDVHFGTHLDVTSYAEGVRETHNPVGRALPAVVWDFYQNGCSLRLLSPQAFSTTVWHFLSILQEHFGSMAGANTYLTPPGTQGFAPHYDDIEAFVLQLEGKKHWRVYGPRTSSEALPQFSSANLTQAELGEPLLEVVLEAGDLLYFPRGFIHQADCLPDAHSLHITVSSYQRNSWGDFLEKLLPAALQMALEEDLEYRQGLPMDCLGYMGVANSDAVDARRTAFVEKVQHLIKKLVDYAPIDAAMDQRAKSFLHDCLPPVLTQSEKQLSVYGFPARWQDGGPRNVDIQITKDTEVRLLHHGVVRLCNEEAGVMLYYTTENSRVYHKEEPKYLEIDPEYTDSIEFLLSSYPNHVSVDTLPCDALEDKISLATLLFEKGILTTKKPLVQV.

Over residues 1 to 11 (MAACGAEERQR) the composition is skewed to basic and acidic residues. The interval 1 to 149 (MAACGAEERQ…PGGGGVPGLL (149 aa)) is disordered. Residues 61-70 (ERAAPPQGAA) are compositionally biased toward low complexity. The span at 73-87 (DRVERAGSSEAKQGD) shows a compositional bias: basic and acidic residues. The region spanning 254-399 (CSLRLLSPQA…DFLEKLLPAA (146 aa)) is the JmjC domain. Fe cation contacts are provided by His300, Asp302, and His365.

Belongs to the ROX family. NO66 subfamily. Requires Fe(2+) as cofactor.

The protein resides in the nucleus. Its subcellular location is the nucleolus. It is found in the nucleoplasm. The catalysed reaction is N(6),N(6)-dimethyl-L-lysyl(36)-[histone H3] + 2 2-oxoglutarate + 2 O2 = L-lysyl(36)-[histone H3] + 2 formaldehyde + 2 succinate + 2 CO2. The enzyme catalyses N(6)-methyl-L-lysyl-[protein] + 2-oxoglutarate + O2 = L-lysyl-[protein] + formaldehyde + succinate + CO2. It carries out the reaction L-histidyl-[protein] + 2-oxoglutarate + O2 = (3S)-3-hydroxy-L-histidyl-[protein] + succinate + CO2. Oxygenase that can act as both a histone lysine demethylase and a ribosomal histidine hydroxylase. Specifically demethylates 'Lys-4' (H3K4me) and 'Lys-36' (H3K36me) of histone H3, thereby playing a central role in histone code. Preferentially demethylates trimethylated H3 'Lys-4' (H3K4me3) and monomethylated H3 'Lys-4' (H3K4me1) residues, while it has weaker activity for dimethylated H3 'Lys-36' (H3K36me2). Also catalyzes demethylation of non-histone proteins. Also catalyzes the hydroxylation of 60S ribosomal protein L8 on 'His-216', thereby playing a role in ribosome biogenesis. This chain is Ribosomal oxygenase 1 (RIOX1), found in Gallus gallus (Chicken).